The sequence spans 432 residues: Glutamyl-tRNA reductase (432 aa).

Residues T49–R52, S109, E114–Q116, and Q120 contribute to the substrate site. The active-site Nucleophile is the C50. Position 198–203 (G198–S203) interacts with NADP(+).

This sequence belongs to the glutamyl-tRNA reductase family. Homodimer.

The catalysed reaction is (S)-4-amino-5-oxopentanoate + tRNA(Glu) + NADP(+) = L-glutamyl-tRNA(Glu) + NADPH + H(+). It participates in porphyrin-containing compound metabolism; protoporphyrin-IX biosynthesis; 5-aminolevulinate from L-glutamyl-tRNA(Glu): step 1/2. The protein operates within porphyrin-containing compound metabolism; chlorophyll biosynthesis. Its function is as follows. Catalyzes the NADPH-dependent reduction of glutamyl-tRNA(Glu) to glutamate 1-semialdehyde (GSA). The chain is Glutamyl-tRNA reductase from Parasynechococcus marenigrum (strain WH8102).